The sequence spans 765 residues: Putative chloride channel-like protein CLC-g (765 aa).

Helical transmembrane passes span 67–87 (VFMK…IGFA), 116–136 (FVVF…ITAF), 167–187 (LIIK…IGKA), 190–210 (MVHT…KRYR), 232–252 (GAAA…LFAL), 262–282 (ALLW…RALI), 315–335 (VLPV…YNFL), 355–375 (ILLA…LPFL), 438–458 (FSVL…YGIV), 462–482 (GLFV…GMLL), 494–514 (AVLG…STCV), and 515–535 (ILLE…VLLI). Positions 568-640 (MRQLLVGDVV…LLKKRVFMPS (73 aa)) constitute a CBS 1 domain. Phosphoserine is present on serine 646. Positions 687 to 748 (FSNASPYTVV…PEHILGLHPS (62 aa)) constitute a CBS 2 domain. A helical membrane pass occupies residues 715–735 (HLLVIPKTSNRPPVVGILTRH).

Belongs to the chloride channel (TC 2.A.49) family. Homodimer. Interacts with PP2A5.

The protein localises to the membrane. Functionally, putative voltage-gated chloride channel. This is Putative chloride channel-like protein CLC-g (CLC-G) from Arabidopsis thaliana (Mouse-ear cress).